Reading from the N-terminus, the 270-residue chain is Bacterial microcompartment shell protein PduB (270 aa).

BMC circularly permuted domains are found at residues 47–152 and 154–262; these read EFVG…DRTF and DVYA…GSEP.

It belongs to the EutL/PduB family. In terms of assembly, homotrimerizes to form a pseudohexamer with a central pore. The trimers pack into an array. Both forms interact with shell protein PduA. Post-translationally, in purified BMCs seen as a 30.0 kDa and 25.0 kDa form; the smaller form is called PduB'.

It is found in the bacterial microcompartment. Its pathway is polyol metabolism; 1,2-propanediol degradation. Functionally, the two proteins produced are among the major shell proteins of the bacterial microcompartment (BMC) shell dedicated to 1,2-propanediol (1,2-PD) degradation. Overexpression of the gene gives large amorphous intracellular structures; when only PduB is overexpressed large circular bodies are observed which contain concentric rings, whereas with PduB' overexpression internal bodies with regular straight-lined structures were generated. The N-terminus of the long form (PduB) is required for correct formation of BMCs. May play a major role in binding the enzyme contents to the shell. Expression of a cosmid containing the full 21-gene pdu operon in E.coli allows E.coli to grow on 1,2-propanediol (1,2-PD) with the appearance of BMCs in its cytoplasm. Its function is as follows. The 1,2-PD-specific bacterial microcompartment (BMC) concentrates low levels of 1,2-PD catabolic enzymes, concentrates volatile reaction intermediates thus enhancing pathway flux and keeps the level of toxic, mutagenic propionaldehyde low. The polypeptide is Bacterial microcompartment shell protein PduB (Citrobacter freundii).